A 615-amino-acid chain; its full sequence is Sodium-dependent noradrenaline transporter (615 aa).

The segment at 1–28 (MLLARMNPQVQPENGGAGPGSEQPPRKR) is disordered. Topologically, residues 1 to 60 (MLLARMNPQVQPENGGAGPGSEQPPRKRKEVLVVKERNGVQCLLASRDGDEQPRETWGKK) are cytoplasmic. The helical transmembrane segment at 61–86 (IDFLLSVVGFAVDLANVWRFPYLCYK) threads the bilayer. Na(+)-binding residues include Gly-69, Ala-71, and Val-72. Residue Asp-73 coordinates (R)-noradrenaline. Asp-73 lines the dopamine pocket. Asn-76 lines the Na(+) pocket. 2 residues coordinate (R)-noradrenaline: Tyr-85 and Lys-86. The Extracellular segment spans residues 87 to 90 (NGGG). A helical transmembrane segment spans residues 91–114 (AFLIPYTLFLIIAGMPLFYMELAL). At 115–133 (GQYNREGAATVWKICPFFK) the chain is on the cytoplasmic side. A helical transmembrane segment spans residues 134–164 (GVGYAVILIALYVGFYYNVIIAWSLYYLFSS). Ala-143 and Gly-147 together coordinate (R)-noradrenaline. Ala-143 is a binding site for dopamine. At 165–231 (FTPTLPWTDC…SSGIHDIGLP (67 aa)) the chain is on the extracellular side. Cys-174 and Cys-183 are oxidised to a cystine. Asn-182, Asn-190, and Asn-196 each carry an N-linked (GlcNAc...) asparagine glycan. Residues 232–252 (QWQLLLCLIIVVIVLFFSLWK) traverse the membrane as a helical segment. The Cytoplasmic portion of the chain corresponds to 253–255 (GVK). A helical membrane pass occupies residues 256-280 (TSGKVVWITATLPYLVLFVLLVHGI). Over 281-304 (TLPGASNGINAYLHIDFYRLKEAT) the chain is Extracellular. Residues 305–330 (VWIDAATQIFFSLGAGFGVLIAFASY) traverse the membrane as a helical segment. Phe-315 contributes to the (R)-noradrenaline binding site. Phe-315 serves as a coordination point for dopamine. A Na(+)-binding site is contributed by Ser-316. Over 331-336 (NKFDNN) the chain is Cytoplasmic. Residues 337 to 360 (CYRDALLTSTINCVTSFISGFAIF) form a helical membrane-spanning segment. Position 348 (Asn-348) interacts with Na(+). Residues 361–400 (SILGYMAHEHKVNIEDVATEGAGLVFILYPEAISTLSGST) are Extracellular-facing. Residue Glu-380 coordinates (R)-noradrenaline. Dopamine is bound at residue Glu-380. The helical transmembrane segment at 401 to 426 (FWAIVFFIMLLALGIDSSMGGMEAVI) threads the bilayer. The Na(+) site is built by Asp-416 and Ser-417. Topologically, residues 427 to 441 (TGLADDFQVLKRHRK) are cytoplasmic. The helical transmembrane segment at 442-462 (LFTFAVSFGTFLLALFCITKG) threads the bilayer. Residue Gly-463 is a topological domain, extracellular. Residues 464 to 490 (IYVLTLLDTFAAGTSILFAVLMEAIGV) traverse the membrane as a helical segment. Topologically, residues 491-520 (SWFYGVDRFSNDIQQMMGFKPGLYWRLCWK) are cytoplasmic. Residues 521-543 (FVSPAFLLFVVIVSIINFKPLTY) traverse the membrane as a helical segment. Topologically, residues 544–546 (DDY) are extracellular. The helical transmembrane segment at 547-567 (IFPLWANWVGWGIAGSSMVLV) threads the bilayer. The Cytoplasmic portion of the chain corresponds to 568-615 (PAYIVYKFFSTRGSIRERLAYGITPASEHHLVAQRDIRQFQLQHWLAI).

The protein belongs to the sodium:neurotransmitter symporter (SNF) (TC 2.A.22) family. SLC6A2 subfamily. As to quaternary structure, monomer. Can form homodimers in the cell membrane; homodimerization is mostly mediated by cholesterol and lipids, and regulates neurotransmitter transport activity. Interacts with PRKCABP. Post-translationally, palmitoylated. Palmitoylation regulates protein levels and neurotransmitter transport.

The protein localises to the cell membrane. Its subcellular location is the cell projection. It localises to the axon. The protein resides in the synapse. It is found in the synaptosome. The enzyme catalyses (R)-noradrenaline(out) + chloride(out) + Na(+)(out) = (R)-noradrenaline(in) + chloride(in) + Na(+)(in). The catalysed reaction is dopamine(out) + chloride(out) + Na(+)(out) = dopamine(in) + chloride(in) + Na(+)(in). It catalyses the reaction dopamine(out) + chloride(out) + 2 Na(+)(out) = dopamine(in) + chloride(in) + 2 Na(+)(in). Inhibited by nisoxetine, oxaprotiline and desipramin. Its function is as follows. Mediates sodium- and chloride-dependent transport of norepinephrine (also known as noradrenaline), the primary signaling neurotransmitter in the autonomic sympathetic nervous system. Is responsible for norepinephrine re-uptake and clearance from the synaptic cleft, thus playing a crucial role in norepinephrine inactivation and homeostasis. Can also mediate sodium- and chloride-dependent transport of dopamine. In Bos taurus (Bovine), this protein is Sodium-dependent noradrenaline transporter (SLC6A2).